The chain runs to 353 residues: Heterogeneous nuclear ribonucleoproteins A2/B1 (353 aa).

Met-1 bears the N-acetylmethionine mark. Phosphothreonine is present on Thr-4. Residue Leu-5 forms a Glycyl lysine isopeptide (Lys-Gly) (interchain with G-Cter in SUMO2) linkage. The Nuclear localization signal signature appears at 9–15 (PLERKKR). RRM domains lie at 21 to 104 (RKLF…ESGK) and 112 to 191 (KKLF…LSRQ). Residue Lys-22 forms a Glycyl lysine isopeptide (Lys-Gly) (interchain with G-Cter in SUMO2) linkage. Ser-29 is subject to Phosphoserine. Residue Arg-38 is modified to Omega-N-methylarginine. Phosphoserine is present on Ser-85. N6,N6-dimethyllysine; alternate is present on Lys-104. Residue Lys-104 forms a Glycyl lysine isopeptide (Lys-Gly) (interchain with G-Cter in SUMO2); alternate linkage. Residues Lys-112, Lys-120, and Lys-137 each participate in a glycyl lysine isopeptide (Lys-Gly) (interchain with G-Cter in SUMO2) cross-link. Thr-140 is subject to Phosphothreonine. Residue Ser-149 is modified to Phosphoserine. A Glycyl lysine isopeptide (Lys-Gly) (interchain with G-Cter in SUMO2) cross-link involves residue Lys-152. Phosphothreonine is present on Thr-159. Residues Lys-168 and Lys-173 each participate in a glycyl lysine isopeptide (Lys-Gly) (interchain with G-Cter in SUMO2); alternate cross-link. Residues Lys-168 and Lys-173 each carry the N6-acetyllysine; alternate modification. Thr-176 is modified (phosphothreonine). Lys-186 is covalently cross-linked (Glycyl lysine isopeptide (Lys-Gly) (interchain with G-Cter in SUMO2)). Phosphoserine occurs at positions 189 and 201. A disordered region spans residues 193–353 (MQEVQSSRSG…SGGYGGRSRY (161 aa)). A compositionally biased stretch (gly residues) spans 202–223 (GRGGNFGFGDSRGGGGNFGPGP). Position 203 is an asymmetric dimethylarginine; alternate (Arg-203). Position 203 is a dimethylated arginine; alternate (Arg-203). At Arg-203 the chain carries Omega-N-methylarginine; alternate. Ser-212 bears the Phosphoserine mark. Position 213 is an asymmetric dimethylarginine; alternate (Arg-213). At Arg-213 the chain carries Dimethylated arginine; alternate. An Omega-N-methylarginine; alternate modification is found at Arg-213. A Phosphoserine modification is found at Ser-225. Arg-228 is subject to Omega-N-methylarginine. Residues Ser-231 and Ser-236 each carry the phosphoserine modification. Arg-238 carries the post-translational modification Omega-N-methylarginine. Ser-259 bears the Phosphoserine mark. Arg-266 is subject to Asymmetric dimethylarginine; alternate. Omega-N-methylarginine; alternate is present on Arg-266. Positions 308–347 (QQPSNYGPMKSGNFGGSRNMGGPYGGGNYGPGGSGGSGGY) are nuclear targeting sequence. Residues 320 to 353 (NFGGSRNMGGPYGGGNYGPGGSGGSGGYGGRSRY) show a composition bias toward gly residues. Ser-324 carries the post-translational modification Phosphoserine. The residue at position 325 (Arg-325) is an Omega-N-methylarginine. Tyr-331 carries the post-translational modification Phosphotyrosine. A phosphoserine mark is found at Ser-341 and Ser-344. Tyr-347 carries the post-translational modification Phosphotyrosine. Arg-350 is modified (omega-N-methylarginine).

Homodimer; dimerization is required for nucleocytoplasmic translocation. Identified in the spliceosome C complex. Identified in a IGF2BP1-dependent mRNP granule complex containing untranslated mRNAs. Interacts with IGF2BP1. Interacts with C9orf72. Interacts with DGCR8. Interacts with TARDBP. Interacts with CKAP5. Interacts with TBK1. Interacts with STING1. Interacts with SRC. Interacts with PPIA/CYPA. Interacts (via C-terminus) with FAM76B; the interaction results in retention of HNRNPA2B1 in the nucleus and inhibition of the NF-kappa-B-mediated inflammatory pathway. Interacts with NF-kappa-B inhibitors NFKBIA and NFKBIE; the interaction may be mediated by the RRM2 domain of HNRNPA2B1, and HNRNPA2B1 may interact simultaneously with FAM76B and either NFKBIA or NFKBIE to form a complex. In terms of processing, sumoylated in exosomes, promoting miRNAs-binding. Asymmetric dimethylation at Arg-266 constitutes the major methylation site. According to a report, methylation affects subcellular location and promotes nuclear localization. According to another report, methylation at Arg-266 does not influence nucleocytoplasmic shuttling.

It localises to the nucleus. The protein localises to the nucleoplasm. Its subcellular location is the cytoplasm. It is found in the cytoplasmic granule. The protein resides in the secreted. It localises to the extracellular exosome. In terms of biological role, heterogeneous nuclear ribonucleoprotein (hnRNP) that associates with nascent pre-mRNAs, packaging them into hnRNP particles. The hnRNP particle arrangement on nascent hnRNA is non-random and sequence-dependent and serves to condense and stabilize the transcripts and minimize tangling and knotting. Packaging plays a role in various processes such as transcription, pre-mRNA processing, RNA nuclear export, subcellular location, mRNA translation and stability of mature mRNAs. Forms hnRNP particles with at least 20 other different hnRNP and heterogeneous nuclear RNA in the nucleus. Involved in transport of specific mRNAs to the cytoplasm in oligodendrocytes and neurons: acts by specifically recognizing and binding the A2RE (21 nucleotide hnRNP A2 response element) or the A2RE11 (derivative 11 nucleotide oligonucleotide) sequence motifs present on some mRNAs, and promotes their transport to the cytoplasm. Specifically binds single-stranded telomeric DNA sequences, protecting telomeric DNA repeat against endonuclease digestion. Also binds other RNA molecules, such as primary miRNA (pri-miRNAs): acts as a nuclear 'reader' of the N6-methyladenosine (m6A) mark by specifically recognizing and binding a subset of nuclear m6A-containing pri-miRNAs. Binding to m6A-containing pri-miRNAs promotes pri-miRNA processing by enhancing binding of DGCR8 to pri-miRNA transcripts. Involved in miRNA sorting into exosomes following sumoylation, possibly by binding (m6A)-containing pre-miRNAs. Acts as a regulator of efficiency of mRNA splicing, possibly by binding to m6A-containing pre-mRNAs. Plays a role in the splicing of pyruvate kinase PKM by binding repressively to sequences flanking PKM exon 9, inhibiting exon 9 inclusion and resulting in exon 10 inclusion and production of the PKM M2 isoform. Also plays a role in the activation of the innate immune response. Mechanistically, senses the presence of viral DNA in the nucleus, homodimerizes and is demethylated by JMJD6. In turn, translocates to the cytoplasm where it activates the TBK1-IRF3 pathway, leading to interferon alpha/beta production. Its function is as follows. (Microbial infection) Involved in the transport of HIV-1 genomic RNA out of the nucleus, to the microtubule organizing center (MTOC), and then from the MTOC to the cytoplasm: acts by specifically recognizing and binding the A2RE (21 nucleotide hnRNP A2 response element) sequence motifs present on HIV-1 genomic RNA, and promotes its transport. The polypeptide is Heterogeneous nuclear ribonucleoproteins A2/B1 (HNRNPA2B1) (Homo sapiens (Human)).